A 143-amino-acid polypeptide reads, in one-letter code: Cofilin (143 aa).

Residue S4 is modified to Phosphoserine. The ADF-H domain maps to 5–137 (GVAVADESLT…SYDSVLERVS (133 aa)).

The protein belongs to the actin-binding proteins ADF family. Interacts with actin and AIP1 in a ternary complex. Post-translationally, the N-terminus is blocked.

The protein localises to the cytoplasm. It is found in the cytoskeleton. Its subcellular location is the nucleus matrix. Its function is as follows. Controls reversibly actin polymerization and depolymerization in a pH-sensitive manner. It has the ability to bind G- and F-actin in a 1:1 ratio of cofilin to actin. Binding to F-actin is regulated by tropomyosin. It is the major component of intranuclear and cytoplasmic actin rods. Required for accumulation of actin at the cell division site via depolymerizing actin at the cell ends. In association with myosin II has a role in the assembly of the contractile ring via severing actin filaments. Involved in the maintenance of the contractile ring once formed. In association with profilin and capping protein, has a role in the mitotic reorganization of the actin cytoskeleton. In effect, yeast cofilin increases the rate of actin polymerization by making new ends available for actin subunit addition. Such a protein complex is important for the polarized growth of yeast cells. This Saccharomyces cerevisiae (strain ATCC 204508 / S288c) (Baker's yeast) protein is Cofilin (COF1).